The primary structure comprises 351 residues: Histidinol-phosphate aminotransferase (351 aa).

Lys-221 bears the N6-(pyridoxal phosphate)lysine mark.

This sequence belongs to the class-II pyridoxal-phosphate-dependent aminotransferase family. Histidinol-phosphate aminotransferase subfamily. As to quaternary structure, homodimer. It depends on pyridoxal 5'-phosphate as a cofactor.

The enzyme catalyses L-histidinol phosphate + 2-oxoglutarate = 3-(imidazol-4-yl)-2-oxopropyl phosphate + L-glutamate. It functions in the pathway amino-acid biosynthesis; L-histidine biosynthesis; L-histidine from 5-phospho-alpha-D-ribose 1-diphosphate: step 7/9. The chain is Histidinol-phosphate aminotransferase from Staphylococcus haemolyticus (strain JCSC1435).